We begin with the raw amino-acid sequence, 139 residues long: Cystatin-1 (139 aa).

A signal peptide spans 1–22 (MHSRLPVPASLCLLLLLPSVLP). A Cystatin domain is found at 27–127 (GGLSPRDVTD…CHFEVWSRPW (101 aa)). The Secondary area of contact motif lies at 71–75 (QVVSG). 2 disulfide bridges follow: C89/C105 and C118/C138.

Belongs to the cystatin family. In terms of tissue distribution, expressed by the venom gland.

The protein localises to the secreted. Functionally, inhibits various C1 cysteine proteases including cathepsin L, papain and cathepsin B. This protein has no toxic activity and its function in the venom is unknown. It may play a role as housekeeping or regulatory protein. The polypeptide is Cystatin-1 (Crotalus adamanteus (Eastern diamondback rattlesnake)).